Reading from the N-terminus, the 190-residue chain is Negative regulator YfiR (190 aa).

Arg-60 contributes to the GMP binding site. Cystine bridges form between Cys-71-Cys-110 and Cys-145-Cys-152. The GMP site is built by Arg-175 and His-177.

Homodimer. Interacts with TpbB/YfiN. Interacts with YfiB. The YfiB-YfiR complex is a 2:2 heterotetramer. Post-translationally, cys-71 and Cys-110 form a disulfide bond in the oxidized form but maintain their free form in the non-oxidized YfiR structure. The Cys-145-Cys-152 disulfide bond is well formed in both structures. The Cys145-Cys152 disulfide bond, but not Cys-71-Cys-110, plays an important role in maintaining the correct folding of the protein.

It is found in the periplasm. TpbB/YfiN repression is released through an YfiB-dependent sequestration of YfiR to the outer membrane. Binds vitamin B6 (VB6) or L-Trp at the periphery of the dimer, and both VB6 and L-Trp are able to reduce biofilm formation induced by YfiB L43P mutant. However, VB6 or L-Trp alone may have little effects in interrupting the YfiB-YfiR interaction. GMP enhances the binding affinity between YfiB and YfiR. Its function is as follows. Negatively regulates the activity of the diguanylate cyclase TpbB/YfiN, leading to decreased c-di-GMP production. Inhibits TpbB/YfiN allosterically, through a hydrophobic interaction between the C-terminus of YfiR and a conserved region of the periplasmic PAS domain of TpbB/YfiN. Under reducing conditions, may also act as an YfiB-independent sensing device that is able to activate TpbB/YfiN in response to the redox status of the periplasm. Functionally, part of the YfiB-TpbB-YfiR (or yfiBNR) system, encoding a tripartite signaling module that modulates intracellular c-di-GMP levels. The system is a key regulator of the small colony variant (SCV) phenotype, and plays an important role in biofilm formation and in vivo persistence. The c-di-GMP produced by TpbB/YfiN stimulates the production of the Pel and Psl exopolysaccharides, which promotes surface attachment, generates an SCV phenotype and confers resistance against phagocytosis. The polypeptide is Negative regulator YfiR (Pseudomonas aeruginosa (strain ATCC 15692 / DSM 22644 / CIP 104116 / JCM 14847 / LMG 12228 / 1C / PRS 101 / PAO1)).